Here is a 264-residue protein sequence, read N- to C-terminus: 5'-nucleotidase SurE (264 aa).

A divalent metal cation-binding residues include Asp-10, Asp-11, Ser-43, and Asn-99.

The protein belongs to the SurE nucleotidase family. The cofactor is a divalent metal cation.

Its subcellular location is the cytoplasm. It catalyses the reaction a ribonucleoside 5'-phosphate + H2O = a ribonucleoside + phosphate. Nucleotidase that shows phosphatase activity on nucleoside 5'-monophosphates. This is 5'-nucleotidase SurE from Methanococcus maripaludis (strain C6 / ATCC BAA-1332).